The sequence spans 896 residues: Serine/threonine-protein kinase TAO3 (896 aa).

The 254-residue stretch at 24-277 (FVDLHEIGHG…SLELLRHDFV (254 aa)) folds into the Protein kinase domain. Residues 30–38 (IGHGSFGAV) and lysine 53 each bind ATP. Aspartate 147 (proton acceptor) is an active-site residue. Disordered regions lie at residues 316–366 (SRNG…SVNS) and 403–423 (DEAD…VQSQ). Residues 334 to 348 (GTSLTRKMDSLGSNH) are compositionally biased toward polar residues. Over residues 349-366 (SIPSTSVSTGSQSSSVNS) the composition is skewed to low complexity. Residues 403–414 (DEADHRDPRPEL) show a composition bias toward basic and acidic residues. Coiled-coil stretches lie at residues 450-513 (EQEN…SKRQ), 545-650 (SFLE…LIRQ), and 752-873 (LKSL…IETF). Residues 565–587 (LNEDHSTPKKEKQERISKHKENL) are compositionally biased toward basic and acidic residues. Positions 565 to 593 (LNEDHSTPKKEKQERISKHKENLQHTQAE) are disordered.

The protein belongs to the protein kinase superfamily. STE Ser/Thr protein kinase family. STE20 subfamily.

It localises to the cytoplasm. It is found in the cell membrane. Its subcellular location is the membrane raft. The protein resides in the lipid droplet. The enzyme catalyses L-seryl-[protein] + ATP = O-phospho-L-seryl-[protein] + ADP + H(+). It catalyses the reaction L-threonyl-[protein] + ATP = O-phospho-L-threonyl-[protein] + ADP + H(+). Functionally, serine/threonine-protein kinase that acts as a regulator of the p38/MAPK14 stress-activated MAPK cascade and of the MAPK8/JNK cascade. In response to DNA damage, involved in the G2/M transition DNA damage checkpoint by activating the p38/MAPK14 stress-activated MAPK cascade, probably by mediating phosphorylation of upstream MAP kinase kinases. Inhibits basal activity of the MAPK8/JNK cascade. This is Serine/threonine-protein kinase TAO3 (taok3) from Xenopus laevis (African clawed frog).